Reading from the N-terminus, the 216-residue chain is Minor capsid protein P6 (216 aa).

The hydrophobic stretch occupies residues 1–21 (MILVGIAVLILLAVFAILYYK).

Interacts with the major capsid protein.

Its subcellular location is the virion. In terms of biological role, one of the minor capsid proteins that constitute a network internal to the major capsid proteins and outside the lipid membrane. The minor capsid proteins glue and stabilize the capsomers. The protein is Minor capsid protein P6 of Paramecium bursaria Chlorella virus 1 (PBCV-1).